The primary structure comprises 578 residues: Membrane protein insertase YidC (578 aa).

Residues 3-23 (IQRSILIVALAVVSYLLVLQW) form a helical membrane-spanning segment. The segment at 34–71 (AASASMNTTQGLPDTPSAAGTSSDVPTAQSGAAGSEAA) is disordered. Residues 37–65 (ASMNTTQGLPDTPSAAGTSSDVPTAQSGA) are compositionally biased toward polar residues. The next 5 helical transmembrane spans lie at 361 to 381 (LELTVDYGFLWFIAQPIFWLL), 387 to 407 (LIGNWGWSIIALTVLIKLAFF), 457 to 477 (LGGCLPILVQMPVFLSLYWVL), 500 to 520 (PFFILPIVMGGTMLIQQMLNP), and 535 to 555 (PIIFTFFFLWFPAGLVLYWVV).

It belongs to the OXA1/ALB3/YidC family. Type 1 subfamily. Interacts with the Sec translocase complex via SecD. Specifically interacts with transmembrane segments of nascent integral membrane proteins during membrane integration.

It is found in the cell inner membrane. Functionally, required for the insertion and/or proper folding and/or complex formation of integral membrane proteins into the membrane. Involved in integration of membrane proteins that insert both dependently and independently of the Sec translocase complex, as well as at least some lipoproteins. Aids folding of multispanning membrane proteins. This Pseudomonas paraeruginosa (strain DSM 24068 / PA7) (Pseudomonas aeruginosa (strain PA7)) protein is Membrane protein insertase YidC.